Here is a 130-residue protein sequence, read N- to C-terminus: Protachykinin-1 (130 aa).

An N-terminal signal peptide occupies residues 1 to 19; sequence MKILVAVAVIFFISTQLSA. A propeptide spanning residues 20–56 is cleaved from the precursor; it reads EEIGANDDFNYWSDWSDSDQIKEEMPEPFEHLLQRIA. A methionine amide mark is found at Met-68 and Met-107.

Belongs to the tachykinin family. Post-translationally, the substance P form is cleaved at Pro-59 by the prolyl endopeptidase FAP (seprase) activity (in vitro). Substance P is also cleaved and degraded by Angiotensin-converting enzyme (ACE) and neprilysin (MME).

The protein resides in the secreted. Functionally, tachykinins are active peptides which excite neurons, evoke behavioral responses, are potent vasodilators and secretagogues, and contract (directly or indirectly) many smooth muscles. The polypeptide is Protachykinin-1 (TAC1) (Bos taurus (Bovine)).